The primary structure comprises 166 residues: Anaerobic nitrite reductase NSHB1 (166 aa).

A Globin domain is found at 13–163 (SFSEEQEALV…LVAAIKQEMK (151 aa)). Positions 46–50 (EVAPS) match the Homodimerization motif. Heme b is bound by residues serine 56, lysine 70, histidine 74, arginine 104, threonine 108, and histidine 109. Residues 116 to 128 (DAHFEVVKFALLD) carry the Homodimerization motif.

Belongs to the plant globin family. In terms of assembly, homodimer. It depends on heme b as a cofactor. In terms of tissue distribution, expressed in coleoptiles, embryos, leaves, seminal roots and roots.

The protein resides in the cytoplasm. Its subcellular location is the nucleus. It catalyses the reaction Fe(III)-heme b-[protein] + nitric oxide + H2O = Fe(II)-heme b-[protein] + nitrite + 2 H(+). Its activity is regulated as follows. Slowly reduced by ascorbic acid (AA); this reaction may become a source of nitric oxide (NO) during hypoxia. Functionally, phytoglobin that reduces nitrite to nitric oxide under anoxic conditions (e.g. during flooding or in waterlogged soil). May not function as an oxygen storage or transport protein. Has an unusually high affinity for O(2) through a hexacoordinate heme iron because of a very low dissociation constant. The polypeptide is Anaerobic nitrite reductase NSHB1 (Oryza sativa subsp. japonica (Rice)).